A 337-amino-acid polypeptide reads, in one-letter code: Eukaryotic translation initiation factor 3 subunit H (337 aa).

One can recognise an MPN domain in the interval 21–153 (VQCDGLAVMK…LKAYRLTPQA (133 aa)).

The protein belongs to the eIF-3 subunit H family. In terms of assembly, component of the eukaryotic translation initiation factor 3 (eIF-3) complex.

It is found in the cytoplasm. Component of the eukaryotic translation initiation factor 3 (eIF-3) complex, which is involved in protein synthesis of a specialized repertoire of mRNAs and, together with other initiation factors, stimulates binding of mRNA and methionyl-tRNAi to the 40S ribosome. The eIF-3 complex specifically targets and initiates translation of a subset of mRNAs involved in cell proliferation. The sequence is that of Eukaryotic translation initiation factor 3 subunit H from Bombyx mori (Silk moth).